We begin with the raw amino-acid sequence, 105 residues long: Small ribosomal subunit protein uS10 (105 aa).

Belongs to the universal ribosomal protein uS10 family. Part of the 30S ribosomal subunit.

Functionally, involved in the binding of tRNA to the ribosomes. This is Small ribosomal subunit protein uS10 from Maridesulfovibrio salexigens (strain ATCC 14822 / DSM 2638 / NCIMB 8403 / VKM B-1763) (Desulfovibrio salexigens).